We begin with the raw amino-acid sequence, 360 residues long: Squamosa promoter-binding-like protein 7 (360 aa).

Residues 74–89 (AQGSGGGGGGGGGGSA) show a composition bias toward gly residues. Positions 74-98 (AQGSGGGGGGGGGGSADQGKRKEKA) are disordered. The SBP-type zinc-finger motif lies at 105–182 (VPRCQVEGCD…AGHNERRRRS (78 aa)). Zn(2+)-binding residues include cysteine 108, cysteine 113, cysteine 130, histidine 133, cysteine 149, cysteine 152, histidine 156, and cysteine 168. A Bipartite nuclear localization signal motif is present at residues 165 to 181 (KKSCRRRLAGHNERRRR). Residues 172-182 (LAGHNERRRRS) show a composition bias toward basic residues. Disordered stretches follow at residues 172–196 (LAGHNERRRRSNASEAMARGSAHPH), 261–306 (FFSD…HENQ), and 318–360 (TTAA…ARVV).

In terms of tissue distribution, expressed in young panicles.

The protein localises to the nucleus. In terms of biological role, trans-acting factor that binds specifically to the consensus nucleotide sequence 5'-TNCGTACAA-3'. May be involved in panicle development. The chain is Squamosa promoter-binding-like protein 7 (SPL7) from Oryza sativa subsp. japonica (Rice).